A 217-amino-acid polypeptide reads, in one-letter code: Large ribosomal subunit protein uL1 (217 aa).

S2 is subject to N-acetylserine. Y11 carries the phosphotyrosine modification. Residues K91 and K106 each carry the N6-acetyllysine modification. K118 carries the post-translational modification N6-acetyllysine; alternate. K118 is covalently cross-linked (Glycyl lysine isopeptide (Lys-Gly) (interchain with G-Cter in SUMO1); alternate). A Glycyl lysine isopeptide (Lys-Gly) (interchain with G-Cter in SUMO2); alternate cross-link involves residue K118. K161 participates in a covalent cross-link: Glycyl lysine isopeptide (Lys-Gly) (interchain with G-Cter in SUMO2).

This sequence belongs to the universal ribosomal protein uL1 family. In terms of assembly, component of the large ribosomal subunit.

It is found in the cytoplasm. In terms of biological role, component of the large ribosomal subunit. The ribosome is a large ribonucleoprotein complex responsible for the synthesis of proteins in the cell. The chain is Large ribosomal subunit protein uL1 (Rpl10a) from Mus musculus (Mouse).